Here is a 346-residue protein sequence, read N- to C-terminus: B3 domain-containing protein At5g60142 (346 aa).

The segment at residues Pro13–Ala109 is a DNA-binding region (TF-B3). Disordered regions lie at residues Gln158–Asp179 and Thr192–Gln243. The segment covering Thr192–Ala217 has biased composition (acidic residues). Residues Asp218 to Thr229 show a composition bias toward basic and acidic residues.

It localises to the nucleus. The polypeptide is B3 domain-containing protein At5g60142 (Arabidopsis thaliana (Mouse-ear cress)).